The following is a 203-amino-acid chain: Holliday junction branch migration complex subunit RuvA (203 aa).

The domain I stretch occupies residues 1–64; the sequence is MIGRLRGYIL…EDAQLLYGFN (64 aa). The segment at 65–142 is domain II; that stretch reads DKQERALFRE…KGLNGDLFNN (78 aa). Residues 143 to 154 form a flexible linker region; it reads SSEITLPTAAQA. Residues 155 to 203 are domain III; the sequence is AELDAEAEAASALVALGYKPQEASRMVSKIAKPGADCETLIRDALRAAL.

Belongs to the RuvA family. In terms of assembly, homotetramer. Forms an RuvA(8)-RuvB(12)-Holliday junction (HJ) complex. HJ DNA is sandwiched between 2 RuvA tetramers; dsDNA enters through RuvA and exits via RuvB. An RuvB hexamer assembles on each DNA strand where it exits the tetramer. Each RuvB hexamer is contacted by two RuvA subunits (via domain III) on 2 adjacent RuvB subunits; this complex drives branch migration. In the full resolvosome a probable DNA-RuvA(4)-RuvB(12)-RuvC(2) complex forms which resolves the HJ.

The protein resides in the cytoplasm. The RuvA-RuvB-RuvC complex processes Holliday junction (HJ) DNA during genetic recombination and DNA repair, while the RuvA-RuvB complex plays an important role in the rescue of blocked DNA replication forks via replication fork reversal (RFR). RuvA specifically binds to HJ cruciform DNA, conferring on it an open structure. The RuvB hexamer acts as an ATP-dependent pump, pulling dsDNA into and through the RuvAB complex. HJ branch migration allows RuvC to scan DNA until it finds its consensus sequence, where it cleaves and resolves the cruciform DNA. This Serratia proteamaculans (strain 568) protein is Holliday junction branch migration complex subunit RuvA.